The chain runs to 132 residues: Small ribosomal subunit protein uS11 (132 aa).

The disordered stretch occupies residues 113 to 132 (VTPIPHDGTRAPGGKRGRRV).

The protein belongs to the universal ribosomal protein uS11 family. As to quaternary structure, part of the 30S ribosomal subunit.

Located on the platform of the 30S subunit. The polypeptide is Small ribosomal subunit protein uS11 (Methanocella arvoryzae (strain DSM 22066 / NBRC 105507 / MRE50)).